The following is an 893-amino-acid chain: Zinc finger protein 281 (893 aa).

4 disordered regions span residues methionine 1–glutamine 113, isoleucine 126–tyrosine 148, alanine 153–valine 172, and serine 198–leucine 251. Residue lysine 2 forms a Glycyl lysine isopeptide (Lys-Gly) (interchain with G-Cter in SUMO2) linkage. A compositionally biased stretch (gly residues) spans phenylalanine 7–glycine 36. Glycyl lysine isopeptide (Lys-Gly) (interchain with G-Cter in SUMO2) cross-links involve residues lysine 100 and lysine 127. Residues lysine 127 to serine 139 are compositionally biased toward basic and acidic residues. Gly residues predominate over residues glycine 161 to histidine 170. Over residues arginine 201–valine 216 the composition is skewed to basic and acidic residues. Glycyl lysine isopeptide (Lys-Gly) (interchain with G-Cter in SUMO2) cross-links involve residues lysine 211, lysine 217, lysine 223, lysine 230, lysine 240, and lysine 256. C2H2-type zinc fingers lie at residues histidine 258 to histidine 280, phenylalanine 286 to histidine 308, and phenylalanine 314 to histidine 336. Residues lysine 298 and lysine 322 each participate in a glycyl lysine isopeptide (Lys-Gly) (interchain with G-Cter in SUMO2) cross-link. The C2H2-type 4; atypical zinc-finger motif lies at tyrosine 342–cysteine 364. A Glycyl lysine isopeptide (Lys-Gly) (interchain with G-Cter in SUMO2) cross-link involves residue lysine 370. Residues glycine 371–methionine 425 are disordered. Over residues proline 377–threonine 396 the composition is skewed to polar residues. Serine 392 is subject to Phosphoserine. Glycyl lysine isopeptide (Lys-Gly) (interchain with G-Cter in SUMO2) cross-links involve residues lysine 406, lysine 413, lysine 457, and lysine 474. Serine 481 is subject to Phosphoserine. Glycyl lysine isopeptide (Lys-Gly) (interchain with G-Cter in SUMO2) cross-links involve residues lysine 490, lysine 495, lysine 536, lysine 596, lysine 614, and lysine 619. A disordered region spans residues glycine 613–lysine 658. The span at glutamate 616–leucine 641 shows a compositional bias: basic and acidic residues. A compositionally biased stretch (polar residues) spans glutamate 645–lysine 658. Residue serine 648 is modified to Phosphoserine. Residues lysine 658 and lysine 667 each participate in a glycyl lysine isopeptide (Lys-Gly) (interchain with G-Cter in SUMO2) cross-link. Residues serine 775–aspartate 813 show a composition bias toward polar residues. Positions serine 775–glutamine 815 are disordered. The residue at position 782 (serine 782) is a Phosphoserine. Glycyl lysine isopeptide (Lys-Gly) (interchain with G-Cter in SUMO2) cross-links involve residues lysine 784, lysine 789, and lysine 793. Serine 805 is subject to Phosphoserine. Residues lysine 816 and lysine 838 each participate in a glycyl lysine isopeptide (Lys-Gly) (interchain with G-Cter in SUMO2) cross-link. Threonine 886 is subject to Phosphothreonine.

Belongs to the krueppel C2H2-type zinc-finger protein family. Interacts with NANOG. Associates with the NuRD complex.

The protein resides in the nucleus. Transcription repressor that plays a role in regulation of embryonic stem cells (ESCs) differentiation. Required for ESCs differentiation and acts by mediating autorepression of NANOG in ESCs: binds to the NANOG promoter and promotes association of NANOG protein to its own promoter and recruits the NuRD complex, which deacetylates histones. Not required for establishement and maintenance of ESCs. Represses the transcription of a number of genes including GAST, ODC1 and VIM. Binds to the G-rich box in the enhancer region of these genes. The protein is Zinc finger protein 281 (Znf281) of Mus musculus (Mouse).